A 430-amino-acid chain; its full sequence is Probable proton-coupled zinc antiporter SLC30A4 (430 aa).

The Cytoplasmic portion of the chain corresponds to 1–113; sequence MAGPGAWKRL…LLKQRKVKTR (113 aa). The residue at position 36 (Ser36) is a Phosphoserine. A helical membrane pass occupies residues 114–134; sequence LTIAAVLYLLFMIGELVGGYM. The Lumenal portion of the chain corresponds to 135–143; it reads ANSLAIMTD. A helical membrane pass occupies residues 144–164; it reads ALHMLTDLSAIILTLLALWLS. His146 and Asp150 together coordinate Zn(2+). Over 165–178 the chain is Cytoplasmic; sequence SKSPTRRFTFGFHR. A helical transmembrane segment spans residues 179–199; the sequence is LEVLSAMISVMLVYVLMGFLL. Residues 200 to 216 are Lumenal-facing; the sequence is YEAVQRTIHMNYEINGD. A helical transmembrane segment spans residues 217–237; sequence VMLITAAVGVAVNVIMGFLLN. Residues 238-275 lie on the Cytoplasmic side of the membrane; that stretch reads QSGHHHSHAHSHSLPSNSPSMVSSGHNHGQDSLAVRAA. The zinc binding stretch occupies residues 240–265; it reads GHHHSHAHSHSLPSNSPSMVSSGHNH. Residues 245 to 264 form a disordered region; that stretch reads HAHSHSLPSNSPSMVSSGHN. The segment covering 249–263 has biased composition (low complexity); it reads HSLPSNSPSMVSSGH. Residues 276 to 296 form a helical membrane-spanning segment; it reads FVHALGDLVQSVGVLIAAYII. Zn(2+) contacts are provided by His278 and Asp282. Residues 297–311 are Lumenal-facing; that stretch reads RFKPEYKIADPICTY. A helical membrane pass occupies residues 312–332; the sequence is IFSLLVAFTTFRIIWDTVVII. Topologically, residues 333 to 430 are cytoplasmic; the sequence is LEGVPSHLNV…TCANCHSSST (98 aa).

The protein belongs to the cation diffusion facilitator (CDF) transporter (TC 2.A.4) family. SLC30A subfamily. Homodimerization could regulate efficiency for zinc transport. Interacts with TMEM163. Widely expressed. Highly expressed in the brain and in mammary epithelial cell lines.

It is found in the endosome membrane. Its subcellular location is the late endosome membrane. It localises to the lysosome membrane. It carries out the reaction Zn(2+)(in) + 2 H(+)(out) = Zn(2+)(out) + 2 H(+)(in). In terms of biological role, probable proton-coupled zinc ion antiporter mediating zinc import from cytoplasm potentially into the endocytic compartment. Controls zinc deposition in milk. The chain is Probable proton-coupled zinc antiporter SLC30A4 from Mus musculus (Mouse).